A 141-amino-acid chain; its full sequence is Nucleoside diphosphate kinase (141 aa).

ATP-binding residues include Lys-11, Phe-59, Arg-87, Thr-93, Arg-104, and Asn-114. His-117 (pros-phosphohistidine intermediate) is an active-site residue.

The protein belongs to the NDK family. In terms of assembly, homotetramer. Mg(2+) is required as a cofactor.

Its subcellular location is the cytoplasm. It carries out the reaction a 2'-deoxyribonucleoside 5'-diphosphate + ATP = a 2'-deoxyribonucleoside 5'-triphosphate + ADP. The enzyme catalyses a ribonucleoside 5'-diphosphate + ATP = a ribonucleoside 5'-triphosphate + ADP. Its function is as follows. Major role in the synthesis of nucleoside triphosphates other than ATP. The ATP gamma phosphate is transferred to the NDP beta phosphate via a ping-pong mechanism, using a phosphorylated active-site intermediate. This chain is Nucleoside diphosphate kinase, found in Polynucleobacter asymbioticus (strain DSM 18221 / CIP 109841 / QLW-P1DMWA-1) (Polynucleobacter necessarius subsp. asymbioticus).